The primary structure comprises 158 residues: NAD(P)H-quinone oxidoreductase subunit J, chloroplastic (158 aa).

This sequence belongs to the complex I 30 kDa subunit family. NDH is composed of at least 16 different subunits, 5 of which are encoded in the nucleus.

It localises to the plastid. The protein localises to the chloroplast thylakoid membrane. It carries out the reaction a plastoquinone + NADH + (n+1) H(+)(in) = a plastoquinol + NAD(+) + n H(+)(out). The catalysed reaction is a plastoquinone + NADPH + (n+1) H(+)(in) = a plastoquinol + NADP(+) + n H(+)(out). NDH shuttles electrons from NAD(P)H:plastoquinone, via FMN and iron-sulfur (Fe-S) centers, to quinones in the photosynthetic chain and possibly in a chloroplast respiratory chain. The immediate electron acceptor for the enzyme in this species is believed to be plastoquinone. Couples the redox reaction to proton translocation, and thus conserves the redox energy in a proton gradient. This is NAD(P)H-quinone oxidoreductase subunit J, chloroplastic from Pelargonium hortorum (Common geranium).